Here is a 91-residue protein sequence, read N- to C-terminus: Alpha-defensin-related sequence 2 (91 aa).

Positions 1-19 (MKKLVLLFALVLLAFQVQA) are cleaved as a signal peptide. Positions 20 to 58 (DSIQNTDEETKTEEQPGEKDQAVSVSFGDPQGSALQDAA) are excised as a propeptide. Residues 22–48 (IQNTDEETKTEEQPGEKDQAVSVSFGD) form a disordered region. Residues 27–40 (EETKTEEQPGEKDQ) are compositionally biased toward basic and acidic residues. A run of 7 repeats spans residues 65-67 (CPQ), 68-70 (CPR), 71-73 (CPS), 74-76 (CPS), 77-79 (CPR), 80-82 (CPR), and 83-85 (CPR). The 7 X 3 AA tandem repeats of C-P-X stretch occupies residues 65–85 (CPQCPRCPSCPSCPRCPRCPR).

The protein belongs to the alpha-defensin family. In terms of tissue distribution, small bowel, spleen, colon, kidney, liver, stomach and femur marrow.

Its subcellular location is the secreted. In terms of biological role, apparent precursor of a secreted, cationic, proline- and cysteine-rich peptide that contains Cys-Pro-Xaa repeats. Unlike cryptdin, the proposed mature peptide region lacks the structural motif characteristic of defensins. It may have microbicidal activities. In Mus musculus (Mouse), this protein is Alpha-defensin-related sequence 2 (Defa-rs2).